The following is a 63-amino-acid chain: Cytochrome c oxidase subunit 5C (63 aa).

Residues 16–34 (VVKEICIGLTLGLVAGGLW) traverse the membrane as a helical segment.

The protein belongs to the cytochrome c oxidase subunit 5C family.

It localises to the mitochondrion inner membrane. Its function is as follows. This protein is one of the nuclear-coded polypeptide chains of cytochrome c oxidase, the terminal oxidase in mitochondrial electron transport. This Oryza sativa subsp. japonica (Rice) protein is Cytochrome c oxidase subunit 5C (COX5C).